Here is a 359-residue protein sequence, read N- to C-terminus: DNA integrity scanning protein DisA (359 aa).

The 140-residue stretch at 7 to 146 (DDIFRATLAA…GRRYVLDGSA (140 aa)) folds into the DAC domain. ATP contacts are provided by residues Gly74, Leu92, and 105–109 (TRHRT).

Belongs to the DisA family. In terms of assembly, homooctamer. Mg(2+) serves as cofactor.

It carries out the reaction 2 ATP = 3',3'-c-di-AMP + 2 diphosphate. Its function is as follows. Participates in a DNA-damage check-point that is active prior to asymmetric division when DNA is damaged. DisA forms globular foci that rapidly scan along the chromosomes during sporulation, searching for lesions. When a lesion is present, DisA pauses at the lesion site. This triggers a cellular response that culminates in a temporary block in sporulation initiation. Functionally, also has diadenylate cyclase activity, catalyzing the condensation of 2 ATP molecules into cyclic di-AMP (c-di-AMP). c-di-AMP acts as a signaling molecule that couples DNA integrity with progression of sporulation. The rise in c-di-AMP level generated by DisA while scanning the chromosome, operates as a positive signal that advances sporulation; upon encountering a lesion, the DisA focus arrests at the damaged site and halts c-di-AMP synthesis. This chain is DNA integrity scanning protein DisA, found in Frankia alni (strain DSM 45986 / CECT 9034 / ACN14a).